The following is a 174-amino-acid chain: Secretion monitor (174 aa).

The N-terminal stretch at 1–35 (MGILNLWRQFGRRYFWSHLLLGVVAASIGAPTILA) is a signal peptide.

Belongs to the SecM family.

The protein resides in the cytoplasm. Its subcellular location is the cytosol. The protein localises to the periplasm. In terms of biological role, regulates secA expression by translational coupling of the secM secA operon. Translational pausing at a specific Pro residue 5 residues before the end of the protein may allow disruption of a mRNA repressor helix that normally suppresses secA translation initiation. This Photorhabdus laumondii subsp. laumondii (strain DSM 15139 / CIP 105565 / TT01) (Photorhabdus luminescens subsp. laumondii) protein is Secretion monitor.